The sequence spans 131 residues: Single-stranded DNA-binding protein 2 (131 aa).

The SSB domain maps to 1 to 103 (MYNKVIMIGR…VLASSFQLLE (103 aa)). An Important for interaction with partner proteins motif is present at residues 126 to 131 (EEELPF).

As to quaternary structure, homotetramer.

Its function is as follows. Plays an important role in DNA replication, recombination and repair. Binds to ssDNA and to an array of partner proteins to recruit them to their sites of action during DNA metabolism. The chain is Single-stranded DNA-binding protein 2 (ssb2) from Streptococcus agalactiae serotype V (strain ATCC BAA-611 / 2603 V/R).